A 196-amino-acid chain; its full sequence is dTTP/UTP pyrophosphatase (196 aa).

Catalysis depends on Asp-76, which acts as the Proton acceptor.

This sequence belongs to the Maf family. YhdE subfamily. Requires a divalent metal cation as cofactor.

It is found in the cytoplasm. It carries out the reaction dTTP + H2O = dTMP + diphosphate + H(+). It catalyses the reaction UTP + H2O = UMP + diphosphate + H(+). In terms of biological role, nucleoside triphosphate pyrophosphatase that hydrolyzes dTTP and UTP. May have a dual role in cell division arrest and in preventing the incorporation of modified nucleotides into cellular nucleic acids. The polypeptide is dTTP/UTP pyrophosphatase (Chlorobium chlorochromatii (strain CaD3)).